Here is a 145-residue protein sequence, read N- to C-terminus: Hemoglobin subunit beta-2 (145 aa).

In terms of domain architecture, Globin spans 2 to 145 (HLTAEDRKEI…GVSHALGHGY (144 aa)). 2 residues coordinate heme b: histidine 63 and histidine 92.

Belongs to the globin family. As to quaternary structure, minor hemoglobin is a tetramer of two alpha-2 chains and two beta-2 chains. In terms of tissue distribution, red blood cells.

In terms of biological role, involved in oxygen transport from the lung to the various peripheral tissues. In Triturus cristatus (Great crested newt), this protein is Hemoglobin subunit beta-2 (HBB2).